We begin with the raw amino-acid sequence, 281 residues long: E2F-associated phosphoprotein (281 aa).

M1 is modified (N-acetylmethionine). The disordered stretch occupies residues 1–27 (MNRLQDDYDPYAVEEPSDEEPALSSSE). Residues 15-27 (EPSDEEPALSSSE) show a composition bias toward acidic residues. At S17 the chain carries Phosphoserine. T37 is modified (phosphothreonine). 2 positions are modified to phosphoserine: S109 and S111. The interval 222–245 (PENRRKRRSAKKMRSNPEDPAERE) is disordered. Residues 225–235 (RRKRRSAKKMR) show a composition bias toward basic residues. Basic and acidic residues predominate over residues 236-245 (SNPEDPAERE).

As to quaternary structure, interacts with E2F1. The C-terminal half binds the N-terminal of E2F1. Also interacts with E2F2 and E2F3, but not E2F4.

It is found in the cytoplasm. Its subcellular location is the nucleus. May play an important role in the fine-tuning of both major E2F1 activities, the regulation of the cell-cycle and the induction of apoptosis. Promotes S-phase entry, and inhibits p14(ARP) expression. The polypeptide is E2F-associated phosphoprotein (Eapp) (Mus musculus (Mouse)).